We begin with the raw amino-acid sequence, 305 residues long: Polyamine aminopropyltransferase 2 (305 aa).

One can recognise a PABS domain in the interval 7–242 (WRFVAEWTSE…GLWGFVAASD (236 aa)). S-methyl-5'-thioadenosine is bound at residue glutamine 36. Histidine 67 and glutamate 91 together coordinate spermidine. Residues aspartate 111 and 143-144 (DG) each bind S-methyl-5'-thioadenosine. Catalysis depends on aspartate 161, which acts as the Proton acceptor. Proline 170 is a binding site for S-methyl-5'-thioadenosine.

The protein belongs to the spermidine/spermine synthase family. In terms of assembly, homodimer or homotetramer.

It is found in the cytoplasm. It carries out the reaction S-adenosyl 3-(methylsulfanyl)propylamine + propane-1,3-diamine = norspermidine + S-methyl-5'-thioadenosine + H(+). In terms of biological role, involved in the biosynthesis of polyamines which are thought to support the growth of thermophilic microorganisms under high-temperature conditions. It seems that long-chain and branched-chain of polyamines effectively stabilize DNA and RNA, respectively. Catalyzes the irreversible transfer of a propylamine group from the amino donor S-adenosylmethioninamine (decarboxy-AdoMet) to 1,3-diaminopropane to yield sym-norspermidine (bis(3-aminopropyl)amine). It can also synthesize thermospermine from spermidine with a very low activity. The chain is Polyamine aminopropyltransferase 2 from Hyperthermus butylicus (strain DSM 5456 / JCM 9403 / PLM1-5).